A 1224-amino-acid chain; its full sequence is Coatomer subunit alpha (1224 aa).

WD repeat units lie at residues T7–D37, E49–N79, G91–N121, and G133–D163. S173 bears the Phosphoserine mark. The residue at position 185 (T185) is a Phosphothreonine. WD repeat units lie at residues G203 to R233 and G247 to D277. The residue at position 591 (T591) is a Phosphothreonine. R965 carries the omega-N-methylarginine modification. S1193 carries the phosphoserine modification.

Oligomeric complex that consists of at least the alpha, beta, beta', gamma, delta, epsilon and zeta subunits. Interacts with SCYL1. Interacts with JAGN1. Interacts with TMEM41B. Interacts with SVEP1. Probably interacts with PEX11A.

It is found in the cytoplasm. Its subcellular location is the golgi apparatus membrane. It localises to the cytoplasmic vesicle. The protein resides in the COPI-coated vesicle membrane. The protein localises to the secreted. Its function is as follows. The coatomer is a cytosolic protein complex that binds to dilysine motifs and reversibly associates with Golgi non-clathrin-coated vesicles, which further mediate biosynthetic protein transport from the ER, via the Golgi up to the trans Golgi network. Coatomer complex is required for budding from Golgi membranes, and is essential for the retrograde Golgi-to-ER transport of dilysine-tagged proteins. In mammals, the coatomer can only be recruited by membranes associated to ADP-ribosylation factors (ARFs), which are small GTP-binding proteins; the complex also influences the Golgi structural integrity, as well as the processing, activity, and endocytic recycling of LDL receptors. Xenin stimulates exocrine pancreatic secretion. It inhibits pentagastrin-stimulated secretion of acid, to induce exocrine pancreatic secretion and to affect small and large intestinal motility. In the gut, xenin interacts with the neurotensin receptor. The polypeptide is Coatomer subunit alpha (COPA) (Bos taurus (Bovine)).